Here is a 404-residue protein sequence, read N- to C-terminus: Tryptophan synthase beta chain (404 aa).

Lys-90 is subject to N6-(pyridoxal phosphate)lysine.

Belongs to the TrpB family. Tetramer of two alpha and two beta chains. The cofactor is pyridoxal 5'-phosphate.

The catalysed reaction is (1S,2R)-1-C-(indol-3-yl)glycerol 3-phosphate + L-serine = D-glyceraldehyde 3-phosphate + L-tryptophan + H2O. Its pathway is amino-acid biosynthesis; L-tryptophan biosynthesis; L-tryptophan from chorismate: step 5/5. Its function is as follows. The beta subunit is responsible for the synthesis of L-tryptophan from indole and L-serine. This chain is Tryptophan synthase beta chain, found in Geobacillus thermodenitrificans (strain NG80-2).